Here is a 220-residue protein sequence, read N- to C-terminus: NADH-quinone oxidoreductase subunit I (220 aa).

4Fe-4S ferredoxin-type domains lie at 71–102 and 112–141; these read LQRL…IITH and DSYT…MGNR. Positions 82, 85, 88, 92, 121, 124, 127, and 131 each coordinate [4Fe-4S] cluster. The interval 187–220 is disordered; that stretch reads MQATPLDYVQEPSKEESKEETPTNPESNKGDENV. Basic and acidic residues predominate over residues 198–207; that stretch reads PSKEESKEET.

It belongs to the complex I 23 kDa subunit family. As to quaternary structure, NDH-1 is composed of 14 different subunits. Subunits NuoA, H, J, K, L, M, N constitute the membrane sector of the complex. [4Fe-4S] cluster serves as cofactor.

The protein resides in the cell inner membrane. It carries out the reaction a quinone + NADH + 5 H(+)(in) = a quinol + NAD(+) + 4 H(+)(out). Functionally, NDH-1 shuttles electrons from NADH, via FMN and iron-sulfur (Fe-S) centers, to quinones in the respiratory chain. The immediate electron acceptor for the enzyme in this species is believed to be ubiquinone. Couples the redox reaction to proton translocation (for every two electrons transferred, four hydrogen ions are translocated across the cytoplasmic membrane), and thus conserves the redox energy in a proton gradient. This chain is NADH-quinone oxidoreductase subunit I, found in Helicobacter pylori (strain Shi470).